Consider the following 297-residue polypeptide: Large ribosomal subunit protein uL18 (297 aa).

Gly-2 carries the post-translational modification N-acetylglycine. An N6-acetyllysine mark is found at Lys-5 and Lys-48. Ser-185 carries the post-translational modification Phosphoserine. Lys-220 is subject to N6-acetyllysine; alternate. Residue Lys-220 forms a Glycyl lysine isopeptide (Lys-Gly) (interchain with G-Cter in SUMO1); alternate linkage. Lys-220 is covalently cross-linked (Glycyl lysine isopeptide (Lys-Gly) (interchain with G-Cter in SUMO2); alternate). At Thr-232 the chain carries Phosphothreonine. The disordered stretch occupies residues Tyr-253–Ser-297. The span at Lys-258 to Arg-268 shows a compositional bias: basic residues. Residue Ser-272 is modified to Phosphoserine.

Belongs to the universal ribosomal protein uL18 family. In terms of assembly, component of the large ribosomal subunit (LSU). Part of the 5S RNP complex, which is a LSU subcomplex composed of the 5S RNA, RPL5 and RPL11. Component of a hexameric 5S RNP precursor complex, composed of 5S RNA, RRS1, RPF2/BXDC1, RPL5, RPL11 and HEATR3; this complex acts as a precursor for ribosome assembly. Interacts with NVL in an ATP-dependent manner. Interacts with RRP1B. Interacts with IPO5, IPO7 and KPNB1; these interactions may be involved in RPL5 nuclear import for the assembly of ribosomal subunits. Interacts with RRP1B.

The protein resides in the cytoplasm. It localises to the nucleus. Its subcellular location is the nucleolus. In terms of biological role, component of the ribosome, a large ribonucleoprotein complex responsible for the synthesis of proteins in the cell. The small ribosomal subunit (SSU) binds messenger RNAs (mRNAs) and translates the encoded message by selecting cognate aminoacyl-transfer RNA (tRNA) molecules. The large subunit (LSU) contains the ribosomal catalytic site termed the peptidyl transferase center (PTC), which catalyzes the formation of peptide bonds, thereby polymerizing the amino acids delivered by tRNAs into a polypeptide chain. The nascent polypeptides leave the ribosome through a tunnel in the LSU and interact with protein factors that function in enzymatic processing, targeting, and the membrane insertion of nascent chains at the exit of the ribosomal tunnel. As part of the 5S RNP/5S ribonucleoprotein particle it is an essential component of the LSU, required for its formation and the maturation of rRNAs. It also couples ribosome biogenesis to p53/TP53 activation. As part of the 5S RNP it accumulates in the nucleoplasm and inhibits MDM2, when ribosome biogenesis is perturbed, mediating the stabilization and the activation of TP53. The chain is Large ribosomal subunit protein uL18 (RPL5) from Macaca fascicularis (Crab-eating macaque).